The following is a 314-amino-acid chain: Ribosomal protein L11 methyltransferase (314 aa).

Residues T161, G182, D204, and N248 each contribute to the S-adenosyl-L-methionine site.

It belongs to the methyltransferase superfamily. PrmA family.

Its subcellular location is the cytoplasm. The catalysed reaction is L-lysyl-[protein] + 3 S-adenosyl-L-methionine = N(6),N(6),N(6)-trimethyl-L-lysyl-[protein] + 3 S-adenosyl-L-homocysteine + 3 H(+). In terms of biological role, methylates ribosomal protein L11. This is Ribosomal protein L11 methyltransferase from Listeria monocytogenes serotype 4a (strain HCC23).